A 164-amino-acid chain; its full sequence is Lipoprotein signal peptidase (164 aa).

4 helical membrane passes run 8-28 (IVAA…LLFV), 39-59 (VTPF…GWFQ), 64-84 (VGAT…AIWM), and 91-111 (LATI…IDRF). Active-site residues include D118 and D140. Residues 131–151 (YSWYVFNLADVAIVAGVIALL) traverse the membrane as a helical segment.

This sequence belongs to the peptidase A8 family.

It is found in the cell inner membrane. It catalyses the reaction Release of signal peptides from bacterial membrane prolipoproteins. Hydrolyzes -Xaa-Yaa-Zaa-|-(S,diacylglyceryl)Cys-, in which Xaa is hydrophobic (preferably Leu), and Yaa (Ala or Ser) and Zaa (Gly or Ala) have small, neutral side chains.. It participates in protein modification; lipoprotein biosynthesis (signal peptide cleavage). This protein specifically catalyzes the removal of signal peptides from prolipoproteins. The protein is Lipoprotein signal peptidase of Nitrobacter hamburgensis (strain DSM 10229 / NCIMB 13809 / X14).